We begin with the raw amino-acid sequence, 274 residues long: 2,3,4,5-tetrahydropyridine-2,6-dicarboxylate N-succinyltransferase (274 aa).

The protein belongs to the transferase hexapeptide repeat family.

The protein resides in the cytoplasm. It catalyses the reaction (S)-2,3,4,5-tetrahydrodipicolinate + succinyl-CoA + H2O = (S)-2-succinylamino-6-oxoheptanedioate + CoA. The protein operates within amino-acid biosynthesis; L-lysine biosynthesis via DAP pathway; LL-2,6-diaminopimelate from (S)-tetrahydrodipicolinate (succinylase route): step 1/3. The protein is 2,3,4,5-tetrahydropyridine-2,6-dicarboxylate N-succinyltransferase of Escherichia fergusonii (strain ATCC 35469 / DSM 13698 / CCUG 18766 / IAM 14443 / JCM 21226 / LMG 7866 / NBRC 102419 / NCTC 12128 / CDC 0568-73).